The sequence spans 397 residues: Citrate synthase (397 aa).

Active-site residues include His-266 and Asp-320.

This sequence belongs to the citrate synthase family.

It catalyses the reaction oxaloacetate + acetyl-CoA + H2O = citrate + CoA + H(+). Its pathway is carbohydrate metabolism; tricarboxylic acid cycle; isocitrate from oxaloacetate: step 1/2. This chain is Citrate synthase (gltA), found in Synechocystis sp. (strain ATCC 27184 / PCC 6803 / Kazusa).